A 272-amino-acid polypeptide reads, in one-letter code: 2-dehydro-3-deoxyphosphooctonate aldolase (272 aa).

This sequence belongs to the KdsA family.

It is found in the cytoplasm. The enzyme catalyses D-arabinose 5-phosphate + phosphoenolpyruvate + H2O = 3-deoxy-alpha-D-manno-2-octulosonate-8-phosphate + phosphate. Its pathway is carbohydrate biosynthesis; 3-deoxy-D-manno-octulosonate biosynthesis; 3-deoxy-D-manno-octulosonate from D-ribulose 5-phosphate: step 2/3. The protein operates within bacterial outer membrane biogenesis; lipopolysaccharide biosynthesis. The sequence is that of 2-dehydro-3-deoxyphosphooctonate aldolase from Trichlorobacter lovleyi (strain ATCC BAA-1151 / DSM 17278 / SZ) (Geobacter lovleyi).